Here is a 496-residue protein sequence, read N- to C-terminus: Probable cytosol aminopeptidase (496 aa).

Mn(2+)-binding residues include lysine 257 and aspartate 262. Residue lysine 269 is part of the active site. Mn(2+) is bound by residues aspartate 281, aspartate 341, and glutamate 343. Arginine 345 is a catalytic residue.

This sequence belongs to the peptidase M17 family. It depends on Mn(2+) as a cofactor.

It is found in the cytoplasm. The enzyme catalyses Release of an N-terminal amino acid, Xaa-|-Yaa-, in which Xaa is preferably Leu, but may be other amino acids including Pro although not Arg or Lys, and Yaa may be Pro. Amino acid amides and methyl esters are also readily hydrolyzed, but rates on arylamides are exceedingly low.. The catalysed reaction is Release of an N-terminal amino acid, preferentially leucine, but not glutamic or aspartic acids.. Its function is as follows. Presumably involved in the processing and regular turnover of intracellular proteins. Catalyzes the removal of unsubstituted N-terminal amino acids from various peptides. The polypeptide is Probable cytosol aminopeptidase (Synechococcus sp. (strain CC9311)).